We begin with the raw amino-acid sequence, 993 residues long: MEEKRSTNSPGFDKPKLNRSGSITSATSHPPRSNSNPKLVAKHQQQLYEESKNKRNQEQQNQQPQQQQQKQTSNQSEDPATQLSSLKFESDKEKEQALLWAFLASYLPEDKGSLQKEFVKHVEYTLAQTKSECTDFSSFQALSYCTRDRLIERWKDTKLFFKQKNVKQVNYMSLEFLLGRSLQNSLSALGLVGKYSDALMDLGFKLEDLYDEERDAGLGNGGLGRLAACFMDSLATCNFPGYGYGLRYKFGMFYQTLVDGEQVELPDYWLNYGSPWEIERLDVSYPINFYGKVSEVEDENGKKVMKWDQGEQMLAVAYDYPIPGFKTYNTVAIRLWSSKPSDEFNLDSFNRGDYLGAIEEKEKSENITNVLYPNDNTMQGKELRLKQQYLFVSATIQDIISQFKETGKPFSEFHNFHAIQLNDTHPTLGIPELMRILIDEEKKSWDEAWDITTKTFSYTNHTVLPEALEKWSVSMVENVLPRHIMIIYEINERFLKLVDQKWPGDMSKRRALSIIDESDGKFIRMAFLAIVGSHTINGVAYLHSELVKHDVFPLFYEIWPNKFQNKTNGVTPRRWIQQSNPQLAELITRSLNSDRWLVNLDIIKDLVHLADNSSFQKEWMEIKRNNKIRLAKYIEKRCDIQVNVDVLFDVQVKRFHEYKRQLLNVLSVINRYLDIKEGKKVAPRVVIFGGKAAPGYYMAKLIIKLINSVADVVNNDPKVGDLLKVVFIPNYCVSNAEIIIPASDISQHISTAGTEASGTSNMKFSMNGGLIIGTLDGANIEIRDAIGHENMYIFGARSEEVNKVKKIIHDGKFTPDTRWARVLTAIKEDTFGPHEQFQDIINSVSGGNDHYILSYDFGSYLDIQNSIDQDFKDRAKWAKKSIMASVCCGKFSSDRTIKEYAQQIWGIEEWKRPGPVPVSNEEARSLLVPPPSGSPNDINAISIERLSPLTFVKQTSASPLSVISGGDKTNNTLKPKQTTKGFNIGGQPGNPTN.

Residues 1-82 are disordered; the sequence is MEEKRSTNSP…SNQSEDPATQ (82 aa). The segment covering 19–48 has biased composition (polar residues); that stretch reads RSGSITSATSHPPRSNSNPKLVAKHQQQLY. Positions 58-77 are enriched in low complexity; sequence EQQNQQPQQQQQKQTSNQSE. The residue at position 763 (K763) is an N6-(pyridoxal phosphate)lysine. Polar residues predominate over residues 962–981; it reads VISGGDKTNNTLKPKQTTKG. The interval 962–993 is disordered; the sequence is VISGGDKTNNTLKPKQTTKGFNIGGQPGNPTN. Positions 983–993 are enriched in gly residues; sequence NIGGQPGNPTN.

The protein belongs to the glycogen phosphorylase family. As to quaternary structure, homodimer. It depends on pyridoxal 5'-phosphate as a cofactor. In terms of processing, the N-terminus is blocked. Enzyme activity requires processing of the 113 kDa peptide to an enzymatically active 106 kDa form of the protein. Processing would occur near the middle of the Gln-rich repetitive element.

The catalysed reaction is [(1-&gt;4)-alpha-D-glucosyl](n) + phosphate = [(1-&gt;4)-alpha-D-glucosyl](n-1) + alpha-D-glucose 1-phosphate. Phosphorylase is an important allosteric enzyme in carbohydrate metabolism. Enzymes from different sources differ in their regulatory mechanisms and in their natural substrates. However, all known phosphorylases share catalytic and structural properties. This chain is Glycogen phosphorylase 2 (glpD), found in Dictyostelium discoideum (Social amoeba).